The following is a 95-amino-acid chain: Large ribosomal subunit protein uL23 (95 aa).

It belongs to the universal ribosomal protein uL23 family. Part of the 50S ribosomal subunit. Contacts protein L29, and trigger factor when it is bound to the ribosome.

Its function is as follows. One of the early assembly proteins it binds 23S rRNA. One of the proteins that surrounds the polypeptide exit tunnel on the outside of the ribosome. Forms the main docking site for trigger factor binding to the ribosome. In Bacillus subtilis (strain 168), this protein is Large ribosomal subunit protein uL23.